We begin with the raw amino-acid sequence, 690 residues long: Protein hook (690 aa).

The 117-residue stretch at 6–122 folds into the Calponin-homology (CH) domain; it reads MEIYESLIRW…RLLQLILGCA (117 aa). Coiled-coil stretches lie at residues 134–515 and 546–577; these read QIME…HHAE and ETTQ…QAAD.

Belongs to the hook family. In terms of assembly, homodimer. Interacts with microtubules via its N-terminus.

Its subcellular location is the cytoplasm. It is found in the cytoskeleton. The protein resides in the endosome. In terms of biological role, involved in endocytic trafficking. Probably acts as a cytoskeletal linker protein that tethers endosome vesicles to the cytoskeleton. The sequence is that of Protein hook from Anopheles gambiae (African malaria mosquito).